Here is a 391-residue protein sequence, read N- to C-terminus: 4-hydroxy-3-methylbut-2-en-1-yl diphosphate synthase (flavodoxin) (391 aa).

Positions 282, 285, 317, and 324 each coordinate [4Fe-4S] cluster.

This sequence belongs to the IspG family. The cofactor is [4Fe-4S] cluster.

It catalyses the reaction (2E)-4-hydroxy-3-methylbut-2-enyl diphosphate + oxidized [flavodoxin] + H2O + 2 H(+) = 2-C-methyl-D-erythritol 2,4-cyclic diphosphate + reduced [flavodoxin]. It functions in the pathway isoprenoid biosynthesis; isopentenyl diphosphate biosynthesis via DXP pathway; isopentenyl diphosphate from 1-deoxy-D-xylulose 5-phosphate: step 5/6. Its function is as follows. Converts 2C-methyl-D-erythritol 2,4-cyclodiphosphate (ME-2,4cPP) into 1-hydroxy-2-methyl-2-(E)-butenyl 4-diphosphate. The chain is 4-hydroxy-3-methylbut-2-en-1-yl diphosphate synthase (flavodoxin) from Acidothermus cellulolyticus (strain ATCC 43068 / DSM 8971 / 11B).